Consider the following 418-residue polypeptide: Serine--tRNA ligase (418 aa).

Residue 227–229 coordinates L-serine; sequence TSE. ATP contacts are provided by residues 258 to 260 and V274; that span reads RRE. Position 281 (E281) interacts with L-serine. An ATP-binding site is contributed by 345 to 348; the sequence is ELTS. T380 lines the L-serine pocket.

This sequence belongs to the class-II aminoacyl-tRNA synthetase family. Type-1 seryl-tRNA synthetase subfamily. In terms of assembly, homodimer. The tRNA molecule binds across the dimer.

The protein resides in the cytoplasm. The catalysed reaction is tRNA(Ser) + L-serine + ATP = L-seryl-tRNA(Ser) + AMP + diphosphate + H(+). The enzyme catalyses tRNA(Sec) + L-serine + ATP = L-seryl-tRNA(Sec) + AMP + diphosphate + H(+). The protein operates within aminoacyl-tRNA biosynthesis; selenocysteinyl-tRNA(Sec) biosynthesis; L-seryl-tRNA(Sec) from L-serine and tRNA(Sec): step 1/1. Functionally, catalyzes the attachment of serine to tRNA(Ser). Is also able to aminoacylate tRNA(Sec) with serine, to form the misacylated tRNA L-seryl-tRNA(Sec), which will be further converted into selenocysteinyl-tRNA(Sec). In Rhodococcus opacus (strain B4), this protein is Serine--tRNA ligase.